The primary structure comprises 120 residues: NAD(P)H-quinone oxidoreductase subunit 3, chloroplastic (120 aa).

3 consecutive transmembrane segments (helical) span residues Ile-9 to Gly-29, Met-64 to Met-84, and Val-88 to Leu-108.

This sequence belongs to the complex I subunit 3 family. In terms of assembly, NDH is composed of at least 16 different subunits, 5 of which are encoded in the nucleus.

The protein resides in the plastid. Its subcellular location is the chloroplast thylakoid membrane. The enzyme catalyses a plastoquinone + NADH + (n+1) H(+)(in) = a plastoquinol + NAD(+) + n H(+)(out). It carries out the reaction a plastoquinone + NADPH + (n+1) H(+)(in) = a plastoquinol + NADP(+) + n H(+)(out). NDH shuttles electrons from NAD(P)H:plastoquinone, via FMN and iron-sulfur (Fe-S) centers, to quinones in the photosynthetic chain and possibly in a chloroplast respiratory chain. The immediate electron acceptor for the enzyme in this species is believed to be plastoquinone. Couples the redox reaction to proton translocation, and thus conserves the redox energy in a proton gradient. This Daucus carota (Wild carrot) protein is NAD(P)H-quinone oxidoreductase subunit 3, chloroplastic.